Consider the following 112-residue polypeptide: Secretoglobin family 2B member 20 (112 aa).

An N-terminal signal peptide occupies residues 1–23 (MKGTLLLLGLLVTGELSFQTTEA). An N-linked (GlcNAc...) asparagine glycan is attached at Asn50.

This sequence belongs to the secretoglobin family. In terms of tissue distribution, expressed in lacrimal gland, at higher level in males than females. Expressed in the submandibular gland.

It is found in the secreted. The protein is Secretoglobin family 2B member 20 (Scgb2b20) of Mus musculus (Mouse).